We begin with the raw amino-acid sequence, 154 residues long: MVLKVKMGDIGVGKSPESIETLLGSCVAIILYDKGKKIGGLAHVMLPKSRMQKEKNPGKYVDTAIPELITKIVKMGARKDRLTVKLAGGAAMFGNNSNNIDVGKKNIEASKIEIKKIGLRVSSEDLGGDTGRTITLSLKDGSVMVRKGSELKTI.

This sequence belongs to the CheD family.

The enzyme catalyses L-glutaminyl-[protein] + H2O = L-glutamyl-[protein] + NH4(+). Functionally, probably deamidates glutamine residues to glutamate on methyl-accepting chemotaxis receptors (MCPs), playing an important role in chemotaxis. The protein is Probable chemoreceptor glutamine deamidase CheD of Methanococcus maripaludis (strain C5 / ATCC BAA-1333).